A 180-amino-acid polypeptide reads, in one-letter code: Ribosome rescue factor SmrB (180 aa).

Residues 98–173 (LDLHGLTQLQ…GNAALLVLVA (76 aa)) enclose the Smr domain.

The protein belongs to the SmrB family. In terms of assembly, associates with collided ribosomes, but not with correctly translating polysomes.

Its function is as follows. Acts as a ribosome collision sensor. Detects stalled/collided disomes (pairs of ribosomes where the leading ribosome is stalled and a second ribosome has collided with it) and endonucleolytically cleaves mRNA at the 5' boundary of the stalled ribosome. Stalled/collided disomes form a new interface (primarily via the 30S subunits) that binds SmrB. Cleaved mRNA becomes available for tmRNA ligation, leading to ribosomal subunit dissociation and rescue of stalled ribosomes. The protein is Ribosome rescue factor SmrB of Pectobacterium carotovorum subsp. carotovorum (strain PC1).